Here is an 883-residue protein sequence, read N- to C-terminus: Glutamate receptor 2 (883 aa).

Positions 1 to 21 are cleaved as a signal peptide; sequence MQKIMHISVLLSPVLWGLIFG. The Extracellular portion of the chain corresponds to 22 to 543; it reads VSSNSIQIGG…GVFSFLDPLA (522 aa). Cys-78 and Cys-330 are joined by a disulfide. N-linked (GlcNAc...) asparagine glycans are attached at residues Asn-256, Asn-370, Asn-406, and Asn-413. Residues Pro-499, Thr-501, and Arg-506 each contribute to the L-glutamate site. A helical membrane pass occupies residues 544–564; the sequence is YEIWMCIVFAYIGVSVVLFLV. Topologically, residues 565–591 are cytoplasmic; that stretch reads SRFSPYEWHTEEFEDGRETQSSESTNE. The helical; Pore-forming intramembrane region spans 592-607; that stretch reads FGIFNSLWFSLGAFMQ. Residues 608-610 lie within the membrane without spanning it; the sequence is QGC. Cys-610 carries S-palmitoyl cysteine lipidation. Residues 611–616 lie on the Cytoplasmic side of the membrane; sequence DISPRS. A helical membrane pass occupies residues 617 to 637; the sequence is LSGRIVGGVWWFFTLIIISSY. The Extracellular segment spans residues 638–812; the sequence is TANLAAFLTV…EKTSALSLSN (175 aa). Residues Ser-675 and Thr-676 each contribute to the L-glutamate site. At Ser-683 the chain carries Phosphoserine; by PKC. At Ser-717 the chain carries Phosphoserine; by PKG. Glu-726 contacts L-glutamate. The cysteines at positions 739 and 794 are disulfide-linked. A helical membrane pass occupies residues 813–833; that stretch reads VAGVFYILVGGLGLAMLVALI. Over 834–883 the chain is Cytoplasmic; it reads EFCYKSRAEAKRMKVAKNPQNINPSSSQNSQNFATYKEGYNVYGIESVKI. Cys-836 carries the S-palmitoyl cysteine lipid modification. Ser-860 and Ser-863 each carry phosphoserine. Positions 867–877 are required for interaction with IQSEC1; sequence ATYKEGYNVYG. The residue at position 876 (Tyr-876) is a Phosphotyrosine. Ser-880 bears the Phosphoserine mark.

It belongs to the glutamate-gated ion channel (TC 1.A.10.1) family. GRIA2 subfamily. Homotetramer or heterotetramer of pore-forming glutamate receptor subunits. Tetramers may be formed by the dimerization of dimers. May interact with MPP4. Forms a ternary complex with GRIP1 and CSPG4. Interacts with ATAD1 in an ATP-dependent manner. ATAD1-catalyzed ATP hydrolysis disrupts binding to ATAD1 and to GRIP1 and leads to AMPAR complex disassembly. Interacts with GRIP2. Interacts with GRIP1. Interacts with NSF via its C-terminus. Interacts with CACNG2, PICK1 and GRIP2. Interacts with GRIA1 and SYNDIG1. Part of a complex containing GRIA2, NSF and NAPA and/or NAPB. Interacts with SNX27 (via PDZ domain); the interaction is required for recycling to the plasma membrane when endocytosed and prevent degradation in lysosomes. Interacts with LRFN1. Found in a complex with GRIA1, GRIA3, GRIA4, CNIH2, CNIH3, CACNG2, CACNG3, CACNG4, CACNG5, CACNG7 and CACNG8. Interacts with CACNG5. Interacts with OLFM2. Interacts with AP4B1, AP4E1 and AP4M1; probably indirect it mediates the somatodendritic localization of GRIA2 in neurons. Forms a complex with GRIP1, NSG1 and STX12; controls the intracellular fate of AMPAR and the endosomal sorting of the GRIA2 subunit toward recycling and membrane targeting. Interacts with IQSEC1; the interaction is required for ARF6 activation. Interacts (heterotetramer form) with CNIH2 and CNIH3; this interaction promotes expression at the plasma membrane and extensively modulates their gating properties by slowing deactivation and desensitization kinetics. Post-translationally, palmitoylated. Depalmitoylated upon L-glutamate stimulation. Cys-610 palmitoylation leads to Golgi retention and decreased cell surface expression. In contrast, Cys-836 palmitoylation does not affect cell surface expression but regulates stimulation-dependent endocytosis. Phosphorylation at Tyr-876 is required for interaction with IQSEC1 and ARF6 activation, which in turn triggers AMPAR internalization for persistent synaptic depression. In terms of processing, ubiquitinated by RNF167, leading to its degradation. Post-translationally, N-glycosylated. As to expression, detected in forebrain. Detected in dendrites of neuronal cells. Expressed in the pyramidal cell layers of CA1 and CA3 and in the granule cell layer of the dentate gyrus.

The protein resides in the cell membrane. Its subcellular location is the postsynaptic cell membrane. It is found in the postsynaptic density membrane. It catalyses the reaction Ca(2+)(in) = Ca(2+)(out). It carries out the reaction Na(+)(in) = Na(+)(out). In terms of biological role, ionotropic glutamate receptor that functions as a ligand-gated cation channel, gated by L-glutamate and glutamatergic agonists such as alpha-amino-3-hydroxy-5-methyl-4-isoxazolepropionic acid (AMPA), quisqualic acid, and kainic acid. L-glutamate acts as an excitatory neurotransmitter at many synapses in the central nervous system and plays an important role in fast excitatory synaptic transmission. Binding of the excitatory neurotransmitter L-glutamate induces a conformation change, leading to the opening of the cation channel, and thereby converts the chemical signal to an electrical impulse upon entry of monovalent and divalent cations such as sodium and calcium. The receptor then desensitizes rapidly and enters in a transient inactive state, characterized by the presence of bound agonist. In the presence of CACNG4 or CACNG7 or CACNG8, shows resensitization which is characterized by a delayed accumulation of current flux upon continued application of L-glutamate. Through complex formation with NSG1, GRIP1 and STX12 controls the intracellular fate of AMPAR and the endosomal sorting of the GRIA2 subunit toward recycling and membrane targeting. The sequence is that of Glutamate receptor 2 from Rattus norvegicus (Rat).